Consider the following 358-residue polypeptide: Serine/threonine-protein phosphatase 2A activator 2 (358 aa).

Interacts with the phosphatase PP2A catalytic subunits PPH21 and PPH22. Forms a ternary complex with PPH21-TAP42.

It is found in the cytoplasm. It carries out the reaction [protein]-peptidylproline (omega=180) = [protein]-peptidylproline (omega=0). Its function is as follows. PPIases accelerate the folding of proteins. It catalyzes the cis-trans isomerization of proline imidic peptide bonds in oligopeptides. Acts as a regulatory subunit for TAP42-associated PP2A-like phosphatases modulating their activity or substrate specificity, probably by inducing a conformational change in the catalytic subunit, a direct target of the PPIase. Can reactivate inactive phosphatase PP2A-phosphatase methylesterase complexes (PP2Ai) in presence of ATP and Mg(2+) by dissociating the inactive form from the complex. Acts also inhibitory at high concentrations. Involved in the regulation of cell cycle progression, mitotic spindle formation and bud morphogenesis. The polypeptide is Serine/threonine-protein phosphatase 2A activator 2 (RRD2) (Saccharomyces cerevisiae (strain ATCC 204508 / S288c) (Baker's yeast)).